Here is a 240-residue protein sequence, read N- to C-terminus: Uridylate kinase (240 aa).

12-15 is an ATP binding site; sequence KISG. The tract at residues 20 to 25 is involved in allosteric activation by GTP; it reads GNQGFG. Gly-54 contributes to the UMP binding site. Positions 55 and 59 each coordinate ATP. UMP is bound by residues Asp-74 and 135 to 142; that span reads TGNPYFST. The ATP site is built by Tyr-168 and Asp-171.

Belongs to the UMP kinase family. As to quaternary structure, homohexamer.

The protein resides in the cytoplasm. The enzyme catalyses UMP + ATP = UDP + ADP. The protein operates within pyrimidine metabolism; CTP biosynthesis via de novo pathway; UDP from UMP (UMPK route): step 1/1. Its activity is regulated as follows. Allosterically activated by GTP. Inhibited by UTP. Catalyzes the reversible phosphorylation of UMP to UDP. This is Uridylate kinase from Moorella thermoacetica (strain ATCC 39073 / JCM 9320).